The primary structure comprises 206 residues: Guanylate kinase (206 aa).

The Guanylate kinase-like domain occupies 13–193 (PLLLVVSGPS…AVSEIMSIIS (181 aa)). 20–27 (GPSGVGKD) contacts ATP.

It belongs to the guanylate kinase family.

It is found in the cytoplasm. The enzyme catalyses GMP + ATP = GDP + ADP. Its function is as follows. Essential for recycling GMP and indirectly, cGMP. The sequence is that of Guanylate kinase from Dehalococcoides mccartyi (strain ATCC BAA-2266 / KCTC 15142 / 195) (Dehalococcoides ethenogenes (strain 195)).